The following is a 179-amino-acid chain: Bifunctional protein PyrR (179 aa).

Residues V99–T111 carry the PRPP-binding motif.

Belongs to the purine/pyrimidine phosphoribosyltransferase family. PyrR subfamily. As to quaternary structure, homodimer and homohexamer; in equilibrium.

The enzyme catalyses UMP + diphosphate = 5-phospho-alpha-D-ribose 1-diphosphate + uracil. Regulates transcriptional attenuation of the pyrimidine nucleotide (pyr) operon by binding in a uridine-dependent manner to specific sites on pyr mRNA. This disrupts an antiterminator hairpin in the RNA and favors formation of a downstream transcription terminator, leading to a reduced expression of downstream genes. Its function is as follows. Also displays a weak uracil phosphoribosyltransferase activity which is not physiologically significant. This is Bifunctional protein PyrR from Brevibacillus brevis (strain 47 / JCM 6285 / NBRC 100599).